Reading from the N-terminus, the 410-residue chain is Serine hydroxymethyltransferase (410 aa).

(6S)-5,6,7,8-tetrahydrofolate contacts are provided by residues L116 and 120-122 (GHL). An N6-(pyridoxal phosphate)lysine modification is found at K225.

It belongs to the SHMT family. In terms of assembly, homodimer. Pyridoxal 5'-phosphate serves as cofactor.

It is found in the cytoplasm. The catalysed reaction is (6R)-5,10-methylene-5,6,7,8-tetrahydrofolate + glycine + H2O = (6S)-5,6,7,8-tetrahydrofolate + L-serine. Its pathway is one-carbon metabolism; tetrahydrofolate interconversion. It functions in the pathway amino-acid biosynthesis; glycine biosynthesis; glycine from L-serine: step 1/1. In terms of biological role, catalyzes the reversible interconversion of serine and glycine with tetrahydrofolate (THF) serving as the one-carbon carrier. This reaction serves as the major source of one-carbon groups required for the biosynthesis of purines, thymidylate, methionine, and other important biomolecules. Also exhibits THF-independent aldolase activity toward beta-hydroxyamino acids, producing glycine and aldehydes, via a retro-aldol mechanism. This is Serine hydroxymethyltransferase from Lacticaseibacillus casei (strain BL23) (Lactobacillus casei).